The sequence spans 426 residues: Dihydroorotase (426 aa).

The Zn(2+) site is built by His58 and His60. Residues 60–62 and Asn92 each bind substrate; that span reads HLR. Asp150, His177, and His230 together coordinate Zn(2+). Asn276 is a substrate binding site. Asp303 is a binding site for Zn(2+). Asp303 is an active-site residue. Residues His307 and 321 to 322 contribute to the substrate site; that span reads FG.

Belongs to the metallo-dependent hydrolases superfamily. DHOase family. Class I DHOase subfamily. Zn(2+) is required as a cofactor.

It catalyses the reaction (S)-dihydroorotate + H2O = N-carbamoyl-L-aspartate + H(+). Its pathway is pyrimidine metabolism; UMP biosynthesis via de novo pathway; (S)-dihydroorotate from bicarbonate: step 3/3. Catalyzes the reversible cyclization of carbamoyl aspartate to dihydroorotate. The protein is Dihydroorotase of Listeria innocua serovar 6a (strain ATCC BAA-680 / CLIP 11262).